Here is a 369-residue protein sequence, read N- to C-terminus: Chanoclavine-I aldehyde reductase fgaOx3 (369 aa).

Residues 23–25, Ala58, Gln100, and His169 each bind FMN; that span reads PMT. Residues His169 and Asn172 each contribute to the substrate site. Catalysis depends on Tyr174, which acts as the Proton donor. FMN is bound by residues Gly292, 316–317, and Arg317; that span reads GR. Tyr344 contacts substrate.

It belongs to the NADH:flavin oxidoreductase/NADH oxidase family. In terms of assembly, monomer. Requires FMN as cofactor.

It catalyses the reaction dihydrochanoclavine-I aldehyde + NADP(+) = chanoclavine-I aldehyde + NADPH + H(+). It participates in alkaloid biosynthesis; ergot alkaloid biosynthesis. Chanoclavine-I aldehyde reductase; part of the gene cluster that mediates the biosynthesis of isofumigaclavines, fungal ergot alkaloids. The tryptophan dimethylallyltransferase ifgA catalyzes the first step of ergot alkaloid biosynthesis by condensing dimethylallyl diphosphate (DMAP) and tryptophan to form 4-dimethylallyl-L-tryptophan. The second step is catalyzed by the methyltransferase ifgB that methylates 4-dimethylallyl-L-tryptophan in the presence of S-adenosyl-L-methionine, resulting in the formation of N-methyl-dimethylallyl-L-tryptophan. The catalase ifgD and the FAD-dependent oxidoreductase ifgC then transform N-methyl-dimethylallyl-L-tryptophan to chanoclavine-I which is further oxidized by ifgE in the presence of NAD(+), resulting in the formation of chanoclavine-I aldehyde. The chanoclavine-I aldehyde reductases ifgG and/or fgaOx3 reduce chanoclavine-I aldehyde to dihydrochanoclavine-I aldehyde that spontaneously dehydrates to form 6,8-dimethyl-6,7-didehydroergoline. The festuclavine dehydrogenases ifgF1 and/or ifgF2 then catalyze the reduction of 6,8-dimethyl-6,7-didehydroergoline to form festuclavine. Hydrolysis of festuclavine by a yet undetermined cytochrome P450 monooxygenase (called ifgH) then leads to the formation of isofumigaclavine B which is in turn acetylated by ifgI to isofumigaclavine A. Penicillium roqueforti has interestingly at least two sets of genes for the consumption of chanoclavine-I aldehyde on three different loci, the OYEs ifgG/fgaOx3 and the festuclavine synthase homologs ifgF1/ifgF2. The reason for the duplication of these genes is unclear, probably to ensure the conversion of chanoclavine-I aldehyde by differential gene expression under various environmental conditions. The sequence is that of Chanoclavine-I aldehyde reductase fgaOx3 from Penicillium roqueforti (strain FM164).